The sequence spans 355 residues: Dual-specificity RNA methyltransferase RlmN (355 aa).

E86 functions as the Proton acceptor in the catalytic mechanism. One can recognise a Radical SAM core domain in the interval K105 to D338. Residues C112 and C343 are joined by a disulfide bond. [4Fe-4S] cluster is bound by residues C119, C123, and C126. S-adenosyl-L-methionine is bound by residues G169 to E170, S201, S224 to H226, and N300. C343 functions as the S-methylcysteine intermediate in the catalytic mechanism.

The protein belongs to the radical SAM superfamily. RlmN family. [4Fe-4S] cluster is required as a cofactor.

It is found in the cytoplasm. The catalysed reaction is adenosine(2503) in 23S rRNA + 2 reduced [2Fe-2S]-[ferredoxin] + 2 S-adenosyl-L-methionine = 2-methyladenosine(2503) in 23S rRNA + 5'-deoxyadenosine + L-methionine + 2 oxidized [2Fe-2S]-[ferredoxin] + S-adenosyl-L-homocysteine. It carries out the reaction adenosine(37) in tRNA + 2 reduced [2Fe-2S]-[ferredoxin] + 2 S-adenosyl-L-methionine = 2-methyladenosine(37) in tRNA + 5'-deoxyadenosine + L-methionine + 2 oxidized [2Fe-2S]-[ferredoxin] + S-adenosyl-L-homocysteine. In terms of biological role, specifically methylates position 2 of adenine 2503 in 23S rRNA and position 2 of adenine 37 in tRNAs. m2A2503 modification seems to play a crucial role in the proofreading step occurring at the peptidyl transferase center and thus would serve to optimize ribosomal fidelity. The chain is Dual-specificity RNA methyltransferase RlmN from Nitratiruptor sp. (strain SB155-2).